The chain runs to 78 residues: High temperature lethal protein 1 (78 aa).

Position 2 is an N-acetylserine (serine 2).

In terms of assembly, interacts directly with RSC8. Component of the two forms of the RSC complex composed of at least either RSC1 or RSC2, and ARP7, ARP9, LDB7, NPL6, RSC3, RSC30, RSC4, RSC58, RSC6, RSC8, RSC9, SFH1, STH1, HTL1 and probably RTT102. The complexes interact with histone and histone variant components of centromeric chromatin. Component of a fungal-specific module (HTL1-LDB7-NPL6-RSC3-RSC30) within the RSC complex.

The protein localises to the nucleus. Functionally, required for cell cycle progression through G2/M transition at temperatures higher than 33 degrees Celsius. Component of the chromatin structure-remodeling complex (RSC), which is involved in transcription regulation and nucleosome positioning. RSC is responsible for the transfer of a histone octamer from a nucleosome core particle to naked DNA. The reaction requires ATP and involves an activated RSC-nucleosome intermediate. Remodeling reaction also involves DNA translocation, DNA twist and conformational change. As a reconfigurer of centromeric and flanking nucleosomes, RSC complex is required both for proper kinetochore function in chromosome segregation and, via a PKC1-dependent signaling pathway, for organization of the cellular cytoskeleton. When associated with the RSC complex, may act coordinately with PKC1 to regulate G2/M transition. Together with LDB7, NPL6, RSC3, RSC30 components, defines a fungal-specific module within the RSC complex that plays a role in many cellular functions including the maintenance of cell wall integrity. The polypeptide is High temperature lethal protein 1 (HTL1) (Saccharomyces cerevisiae (strain ATCC 204508 / S288c) (Baker's yeast)).